The chain runs to 204 residues: MSSKLTDRQQQVLDCIRECLKDNGMAPTRAEIADIMGFQSKNAASDHLRALERKGYIKLHSDRSRGIQLLDHAYWGEEELPVVGKVAAGIPIEAIENVERTVPVPQGLFKQRPTYLLKVQGDSMVDAGIFDGDLIAVRKSNVARSGEIVVARIDEEVTVKTLKLNKSSATLLPANEAYEPIKVPADQLIIEGIFVGLIRDPNSF.

The H-T-H motif DNA-binding region spans 29-49; sequence RAEIADIMGFQSKNAASDHLR. Active-site for autocatalytic cleavage activity residues include S123 and K160.

It belongs to the peptidase S24 family. In terms of assembly, homodimer.

The enzyme catalyses Hydrolysis of Ala-|-Gly bond in repressor LexA.. Functionally, represses a number of genes involved in the response to DNA damage (SOS response), including recA and lexA. In the presence of single-stranded DNA, RecA interacts with LexA causing an autocatalytic cleavage which disrupts the DNA-binding part of LexA, leading to derepression of the SOS regulon and eventually DNA repair. The sequence is that of LexA repressor from Alcanivorax borkumensis (strain ATCC 700651 / DSM 11573 / NCIMB 13689 / SK2).